We begin with the raw amino-acid sequence, 300 residues long: Regulatory protein NocR (300 aa).

An HTH lysR-type domain is found at 1 to 59 (MIQSRQLEAFRAVMLTGGMTSAANLVRITQPAISRLIRDLEEEIGISLFERTGNRLRPT). Positions 19–38 (MTSAANLVRITQPAISRLIR) form a DNA-binding region, H-T-H motif.

Belongs to the LysR transcriptional regulatory family.

Functionally, positive regulatory protein for the noc operon involved in nopaline catabolism and uptake. This is Regulatory protein NocR (nocR) from Agrobacterium fabrum (strain C58 / ATCC 33970) (Agrobacterium tumefaciens (strain C58)).